Reading from the N-terminus, the 326-residue chain is MGKSKKNRAAATNQLKHKSQTSAEAFSFGDPVPVLDRRELLDYVECVQTDRWYEPPVSFDGLARTFRAAVHHSSPIAVKCNILTSTYIPHPLLSQQAFSRFVQDYLVFGNAYLEKRTNRFGEVIALEPALAKYTRRGLDLDTYWFVQYGMTTQPYQFTKGSIFHLLEPDINQEIYGLPGYLSAIPSALLNESATLFRRKYYINGSHAGFIMYMTDAAQNQEDVNNLRNAMKSAKGPGNFRNLFMYSPNGKKDGLQIIPLSEVAAKDEFLNIKNVSRDDMMAAHRVPPQMMGIMPNNVRGVWGCGKSEFSVCEERINTLTEKDAGIK.

A disordered region spans residues 1–24 (MGKSKKNRAAATNQLKHKSQTSAE). A compositionally biased stretch (polar residues) spans 10–24 (AATNQLKHKSQTSAE).

It belongs to the phage portal family. PBSX subfamily.

This is Protein ORF5 in retron Ec67 from Escherichia coli.